The primary structure comprises 1209 residues: Calcium-activated potassium channel subunit alpha-1 (1209 aa).

A compositionally biased stretch (gly residues) spans 1 to 23 (MANGGGGGGGSSGGGGGGGGGSG). Residues 1–61 (MANGGGGGGG…SSSSSSSSSV (61 aa)) form a disordered region. Residues 1–86 (MANGGGGGGG…VPCDSRGQRM (86 aa)) are Extracellular-facing. Residues 25–39 (RMSSNIHANNLSLDA) are compositionally biased toward polar residues. Residues 40–60 (SSSSSSSSSSSSSSSSSSSSS) show a composition bias toward low complexity. Residues 87-107 (WWAFLASSMVTFFGGLFIILL) form a helical membrane-spanning segment. Over 108-178 (WRTLKYLWTV…MISAQTLTGR (71 aa)) the chain is Cytoplasmic. 3 S-palmitoyl cysteine lipidation sites follow: C118, C119, and C121. Residues 179 to 199 (VLVVLVFALSIGALVIYFIDS) traverse the membrane as a helical segment. The Extracellular portion of the chain corresponds to 200–214 (SNPIESCQNFYKDFT). A helical membrane pass occupies residues 215 to 235 (LQIDMAFNVFFLLYFGLRFIA). At 236–239 (ANDK) the chain is on the cytoplasmic side. A helical membrane pass occupies residues 240–260 (LWFWLEVNSVVDFFTVPPVFV). At 261–264 (SVYL) the chain is on the extracellular side. The chain crosses the membrane as a helical; Voltage-sensor span at residues 265 to 285 (NRSWLGLRFLRALRLIQFSEI). The Cytoplasmic segment spans residues 286–300 (LQFLNILKTSNSIKL). The helical transmembrane segment at 301–321 (VNLLSIFISTWLTAAGFIHLV) threads the bilayer. Over 322-335 (ENSGDPWENFQNNQ) the chain is Extracellular. Positions 336 to 358 (ALTYWECVYLLMVTMSTVGYGDV) form an intramembrane region, pore-forming. Residues 352–355 (TVGY) carry the Selectivity for potassium motif. Residues 359–367 (YAKTTLGRL) lie on the Extracellular side of the membrane. A helical membrane pass occupies residues 368-388 (FMVFFILGGLAMFASYVPEII). At 389–1209 (ELIGNRKKYG…KQNRKEMVYR (821 aa)) the chain is on the cytoplasmic side. In terms of domain architecture, RCK N-terminal 1 spans 407-549 (RKHIVVCGHI…WNWKEGDDAI (143 aa)). Mg(2+) is bound by residues E439, Q462, and E464. Residues 556 to 576 (LGFIAQSCLAQGLSTMLANLF) are segment S7. The interval 613 to 633 (LSFPTVCELCFVKLKLLMIAI) is segment S8. D670 carries the post-translational modification Phosphothreonine. K672 is subject to Phosphoserine. A heme-binding motif region spans residues 681–685 (CKACH). The tract at residues 703 to 733 (EDEQPPTLSPKKKQRNGGMRNSPNTSPKLMR) is disordered. T709 carries the phosphothreonine modification. S711, S724, and S728 each carry phosphoserine. The segment at 783–803 (VLSGHVVVCIFGDVSSALIGL) is segment S9. The RCK N-terminal 2 domain occupies 785–929 (SGHVVVCIFG…MDRSSPDNSP (145 aa)). A Phosphothreonine modification is found at T916. Residues S924 and S928 each carry the phosphoserine modification. The Calcium bowl motif lies at 976–998 (TELVNDTNVQFLDQDDDDDPDTE). 4 residues coordinate Ca(2+): Q985, D988, D991, and D993. Positions 1005–1025 (FACGTAFAVSVLDSLMSATYF) are segment S10. The span at 1159–1184 (RASLSHSSHSSQSSSKKSSSVHSIPS) shows a compositional bias: low complexity. The interval 1159-1209 (RASLSHSSHSSQSSSKKSSSVHSIPSTANRPNRPKSRESRDKQNRKEMVYR) is disordered. Over residues 1193 to 1209 (KSRESRDKQNRKEMVYR) the composition is skewed to basic and acidic residues. 2 positions are modified to phosphoserine: S1194 and S1197.

The protein belongs to the potassium channel family. Calcium-activated (TC 1.A.1.3) subfamily. KCa1.1/KCNMA1 sub-subfamily. As to quaternary structure, homotetramer; which constitutes the calcium-activated potassium channel. Interacts with beta subunits KCNMB1, KCNMB2, KCNMB3 and KCNMB4. Interacts with gamma subunits LRRC26, LRRC38, LRRC52 and LRRC55. Beta and gamma subunits are accessory, and modulate its activity. Interacts with RAB11B. Post-translationally, phosphorylated. Phosphorylation by kinases such as PKA and/or PKG. In smooth muscles, phosphorylation affects its activity. In terms of processing, palmitoylation by ZDHHC22 and ZDHHC23 within the intracellular linker between the S0 and S1 transmembrane domains regulates localization to the plasma membrane. Depalmitoylated by LYPLA1 and LYPLAL1, leading to retard exit from the trans-Golgi network.

The protein resides in the cell membrane. It catalyses the reaction K(+)(in) = K(+)(out). With respect to regulation, ethanol and carbon monoxide-bound heme increase channel activation. Heme inhibits channel activation. Its function is as follows. Potassium channel activated by both membrane depolarization or increase in cytosolic Ca(2+) that mediates export of K(+). It is also activated by the concentration of cytosolic Mg(2+). Its activation dampens the excitatory events that elevate the cytosolic Ca(2+) concentration and/or depolarize the cell membrane. It therefore contributes to repolarization of the membrane potential. Plays a key role in controlling excitability in a number of systems, such as regulation of the contraction of smooth muscle, the tuning of hair cells in the cochlea, regulation of transmitter release, and innate immunity. In smooth muscles, its activation by high level of Ca(2+), caused by ryanodine receptors in the sarcoplasmic reticulum, regulates the membrane potential. In cochlea cells, its number and kinetic properties partly determine the characteristic frequency of each hair cell and thereby helps to establish a tonotopic map. Kinetics of KCNMA1 channels are determined by alternative splicing, phosphorylation status and its combination with modulating beta subunits. Highly sensitive to both iberiotoxin (IbTx) and charybdotoxin (CTX). Potassium channel activated by both membrane depolarization or increase in cytosolic Ca(2+) that mediates export of K(+). The sequence is that of Calcium-activated potassium channel subunit alpha-1 (Kcnma1) from Mus musculus (Mouse).